The primary structure comprises 448 residues: Tubulin alpha-2 chain (448 aa).

Positions 11, 69, 138, 142, 143, 177, 204, and 226 each coordinate GTP. Residue E69 participates in Mg(2+) binding. Residue E252 is part of the active site. A disordered region spans residues 428 to 448 (KDYEEVGADSNEGGEEEGEEY). Residues 429–448 (DYEEVGADSNEGGEEEGEEY) are compositionally biased toward acidic residues.

The protein belongs to the tubulin family. Dimer of alpha and beta chains. A typical microtubule is a hollow water-filled tube with an outer diameter of 25 nm and an inner diameter of 15 nM. Alpha-beta heterodimers associate head-to-tail to form protofilaments running lengthwise along the microtubule wall with the beta-tubulin subunit facing the microtubule plus end conferring a structural polarity. Microtubules usually have 13 protofilaments but different protofilament numbers can be found in some organisms and specialized cells. Mg(2+) serves as cofactor. In terms of processing, undergoes a tyrosination/detyrosination cycle, the cyclic removal and re-addition of a C-terminal tyrosine residue. In terms of tissue distribution, expressed in intestine, pharyngeal muscle cells, and a subset of neurons.

The protein localises to the cytoplasm. Its subcellular location is the cytoskeleton. It carries out the reaction GTP + H2O = GDP + phosphate + H(+). Tubulin is the major constituent of microtubules, a cylinder consisting of laterally associated linear protofilaments composed of alpha- and beta-tubulin heterodimers. Microtubules grow by the addition of GTP-tubulin dimers to the microtubule end, where a stabilizing cap forms. Below the cap, tubulin dimers are in GDP-bound state, owing to GTPase activity of alpha-tubulin. Required for the normal dynamic behavior of the non-centrosomal microtubules in the epidermal syncytium. Involved in the redistribution of microtubule end-binding protein EB1/ebp-2 caused by wounding. Required to modulate expression in the epidermis of antimicrobial peptides, such as nlp-29, after wounding, or fungal infection. This is Tubulin alpha-2 chain (tba-2) from Caenorhabditis elegans.